A 163-amino-acid polypeptide reads, in one-letter code: Nucleotide-binding protein Acel_0286 (163 aa).

The protein belongs to the YajQ family.

Nucleotide-binding protein. This is Nucleotide-binding protein Acel_0286 from Acidothermus cellulolyticus (strain ATCC 43068 / DSM 8971 / 11B).